The primary structure comprises 418 residues: NADH-quinone oxidoreductase subunit D (418 aa).

Belongs to the complex I 49 kDa subunit family. In terms of assembly, NDH-1 is composed of 14 different subunits. Subunits NuoB, C, D, E, F, and G constitute the peripheral sector of the complex.

It localises to the cell inner membrane. The enzyme catalyses a quinone + NADH + 5 H(+)(in) = a quinol + NAD(+) + 4 H(+)(out). NDH-1 shuttles electrons from NADH, via FMN and iron-sulfur (Fe-S) centers, to quinones in the respiratory chain. The immediate electron acceptor for the enzyme in this species is believed to be ubiquinone. Couples the redox reaction to proton translocation (for every two electrons transferred, four hydrogen ions are translocated across the cytoplasmic membrane), and thus conserves the redox energy in a proton gradient. The sequence is that of NADH-quinone oxidoreductase subunit D from Neisseria meningitidis serogroup C / serotype 2a (strain ATCC 700532 / DSM 15464 / FAM18).